A 785-amino-acid chain; its full sequence is Rho-GTPase-activating protein RGD3 (785 aa).

Position 2 is an N-acetylserine (serine 2). The 433-residue stretch at 31–463 folds into the F-BAR domain; that stretch reads ISLRNTYWTK…PQETANADVR (433 aa). The tract at residues 313 to 340 is disordered; the sequence is SNGNAGNRKKKSYGELTHSDNEHEEKSN. Over residues 329-339 the composition is skewed to basic and acidic residues; it reads THSDNEHEEKS. Positions 520–702 constitute a Rho-GAP domain; it reads IILRQIEKEP…TFFINERTVE (183 aa). The tract at residues 732–785 is disordered; the sequence is TAPIHSTPKPPPNDKDGHFIPRPFKTSSTPTTPERPKRKSGLFLPINVNDVPST. Residue serine 759 is modified to Phosphoserine. Phosphothreonine is present on residues threonine 760, threonine 762, and threonine 763.

Post-translationally, phosphorylation at the C-terminus negatively regulates the activity and the polarized localization.

It localises to the cytoplasmic vesicle membrane. The protein localises to the cell membrane. Its subcellular location is the bud tip. The protein resides in the bud neck. Its function is as follows. GTPase activating protein (GAP) for RHO3 and CDC42 that binds membranes through phosphatidylinositol 4,5-bisphosphate. Plays a key role in cell polarity. Modulates the RHO3 distribution at the plasma membrane and its polarity during growth. The sequence is that of Rho-GTPase-activating protein RGD3 from Saccharomyces cerevisiae (strain ATCC 204508 / S288c) (Baker's yeast).